A 90-amino-acid chain; its full sequence is MALPRITQKEMTEREQRELKTLLDRARIAHGRVLTNSETNSIKKDYIDKLMVEREAEAKKARQLKKKQAYKPDPEASFSWSANTSTRGRR.

The segment at Arg-62–Arg-90 is disordered. The span at Phe-78–Arg-90 shows a compositional bias: polar residues.

This is an uncharacterized protein from Escherichia coli (strain K12).